The chain runs to 79 residues: MSEIGERVKKIVVEHLGVEPEKVVDSASFIDDLGADSLDTVELVMAFEEEFGCEIPDDAAETILTVGDATKFLEKNAKS.

The Carrier domain occupies 2–77 (SEIGERVKKI…DATKFLEKNA (76 aa)). An O-(pantetheine 4'-phosphoryl)serine modification is found at S37.

This sequence belongs to the acyl carrier protein (ACP) family. 4'-phosphopantetheine is transferred from CoA to a specific serine of apo-ACP by AcpS. This modification is essential for activity because fatty acids are bound in thioester linkage to the sulfhydryl of the prosthetic group.

The protein resides in the cytoplasm. It participates in lipid metabolism; fatty acid biosynthesis. In terms of biological role, carrier of the growing fatty acid chain in fatty acid biosynthesis. This Nitrobacter winogradskyi (strain ATCC 25391 / DSM 10237 / CIP 104748 / NCIMB 11846 / Nb-255) protein is Acyl carrier protein.